A 166-amino-acid polypeptide reads, in one-letter code: Interferon gamma (166 aa).

Residues 1–23 (MNYTSYILAFQLCVILCSSGCNC) form the signal peptide. Q24 is modified (pyrrolidone carboxylic acid). N-linked (GlcNAc...) asparagine glycosylation is found at N39 and N106.

It belongs to the type II (or gamma) interferon family. In terms of assembly, homodimer. Interacts with IFNGR1 (via extracellular domain); this interaction promotes IFNGR1 dimerization. Released primarily from activated T lymphocytes.

Its subcellular location is the secreted. In terms of biological role, type II interferon produced by immune cells such as T-cells and NK cells that plays crucial roles in antimicrobial, antiviral, and antitumor responses by activating effector immune cells and enhancing antigen presentation. Primarily signals through the JAK-STAT pathway after interaction with its receptor IFNGR1 to affect gene regulation. Upon IFNG binding, IFNGR1 intracellular domain opens out to allow association of downstream signaling components JAK2, JAK1 and STAT1, leading to STAT1 activation, nuclear translocation and transcription of IFNG-regulated genes. Many of the induced genes are transcription factors such as IRF1 that are able to further drive regulation of a next wave of transcription. Plays a role in class I antigen presentation pathway by inducing a replacement of catalytic proteasome subunits with immunoproteasome subunits. In turn, increases the quantity, quality, and repertoire of peptides for class I MHC loading. Increases the efficiency of peptide generation also by inducing the expression of activator PA28 that associates with the proteasome and alters its proteolytic cleavage preference. Up-regulates as well MHC II complexes on the cell surface by promoting expression of several key molecules such as cathepsins B/CTSB, H/CTSH, and L/CTSL. Participates in the regulation of hematopoietic stem cells during development and under homeostatic conditions by affecting their development, quiescence, and differentiation. The chain is Interferon gamma (IFNG) from Canis lupus familiaris (Dog).